The following is a 119-amino-acid chain: Large ribosomal subunit protein bL20c (119 aa).

Belongs to the bacterial ribosomal protein bL20 family.

It is found in the plastid. Its subcellular location is the chloroplast. In terms of biological role, binds directly to 23S ribosomal RNA and is necessary for the in vitro assembly process of the 50S ribosomal subunit. It is not involved in the protein synthesizing functions of that subunit. The chain is Large ribosomal subunit protein bL20c from Triticum aestivum (Wheat).